The primary structure comprises 42 residues: Photosystem II reaction center protein J (42 aa).

A helical membrane pass occupies residues 10 to 30; sequence IPLWLVGTVVGTLALGLVALF.

This sequence belongs to the PsbJ family. PSII is composed of 1 copy each of membrane proteins PsbA, PsbB, PsbC, PsbD, PsbE, PsbF, PsbH, PsbI, PsbJ, PsbK, PsbL, PsbM, PsbT, PsbX, PsbY, PsbZ, Psb30/Ycf12, at least 3 peripheral proteins of the oxygen-evolving complex and a large number of cofactors. It forms dimeric complexes.

The protein resides in the plastid. Its subcellular location is the chloroplast thylakoid membrane. Its function is as follows. One of the components of the core complex of photosystem II (PSII). PSII is a light-driven water:plastoquinone oxidoreductase that uses light energy to abstract electrons from H(2)O, generating O(2) and a proton gradient subsequently used for ATP formation. It consists of a core antenna complex that captures photons, and an electron transfer chain that converts photonic excitation into a charge separation. The sequence is that of Photosystem II reaction center protein J from Oltmannsiellopsis viridis (Marine flagellate).